The following is a 225-amino-acid chain: Phosphoribosylformylglycinamidine synthase subunit PurQ (225 aa).

One can recognise a Glutamine amidotransferase type-1 domain in the interval 6–225; the sequence is FGVVVFPGSN…WQSILRSFAA (220 aa). Cys89 (nucleophile) is an active-site residue. Catalysis depends on residues His198 and Glu200.

In terms of assembly, part of the FGAM synthase complex composed of 1 PurL, 1 PurQ and 2 PurS subunits.

The protein resides in the cytoplasm. It carries out the reaction N(2)-formyl-N(1)-(5-phospho-beta-D-ribosyl)glycinamide + L-glutamine + ATP + H2O = 2-formamido-N(1)-(5-O-phospho-beta-D-ribosyl)acetamidine + L-glutamate + ADP + phosphate + H(+). It catalyses the reaction L-glutamine + H2O = L-glutamate + NH4(+). It functions in the pathway purine metabolism; IMP biosynthesis via de novo pathway; 5-amino-1-(5-phospho-D-ribosyl)imidazole from N(2)-formyl-N(1)-(5-phospho-D-ribosyl)glycinamide: step 1/2. Its function is as follows. Part of the phosphoribosylformylglycinamidine synthase complex involved in the purines biosynthetic pathway. Catalyzes the ATP-dependent conversion of formylglycinamide ribonucleotide (FGAR) and glutamine to yield formylglycinamidine ribonucleotide (FGAM) and glutamate. The FGAM synthase complex is composed of three subunits. PurQ produces an ammonia molecule by converting glutamine to glutamate. PurL transfers the ammonia molecule to FGAR to form FGAM in an ATP-dependent manner. PurS interacts with PurQ and PurL and is thought to assist in the transfer of the ammonia molecule from PurQ to PurL. The polypeptide is Phosphoribosylformylglycinamidine synthase subunit PurQ (Synechococcus sp. (strain JA-2-3B'a(2-13)) (Cyanobacteria bacterium Yellowstone B-Prime)).